The following is an 880-amino-acid chain: Valine--tRNA ligase (880 aa).

The short motif at 48 to 58 (PNVTGKLHLGH) is the 'HIGH' region element. Positions 524–528 (KMSKS) match the 'KMSKS' region motif. An ATP-binding site is contributed by K527. The stretch at 808–879 (LAGLINIEEE…VKERIAQLRS (72 aa)) forms a coiled coil.

The protein belongs to the class-I aminoacyl-tRNA synthetase family. ValS type 1 subfamily. Monomer.

Its subcellular location is the cytoplasm. The enzyme catalyses tRNA(Val) + L-valine + ATP = L-valyl-tRNA(Val) + AMP + diphosphate. In terms of biological role, catalyzes the attachment of valine to tRNA(Val). As ValRS can inadvertently accommodate and process structurally similar amino acids such as threonine, to avoid such errors, it has a 'posttransfer' editing activity that hydrolyzes mischarged Thr-tRNA(Val) in a tRNA-dependent manner. This Enterococcus faecalis (strain ATCC 700802 / V583) protein is Valine--tRNA ligase.